Here is a 294-residue protein sequence, read N- to C-terminus: 4-hydroxybenzoate octaprenyltransferase (294 aa).

8 helical membrane passes run 24–44 (IGIL…ADGF), 47–67 (LHLI…GCVI), 99–119 (LLAA…DPLV), 139–159 (FLAI…PMGF), 164–184 (GEVP…AVAY), 213–233 (VAAV…VGIA), 238–258 (PWFF…YTLI), and 274–294 (NWVG…FPAA).

The protein belongs to the UbiA prenyltransferase family. Mg(2+) is required as a cofactor.

The protein resides in the cell inner membrane. The catalysed reaction is all-trans-octaprenyl diphosphate + 4-hydroxybenzoate = 4-hydroxy-3-(all-trans-octaprenyl)benzoate + diphosphate. The protein operates within cofactor biosynthesis; ubiquinone biosynthesis. Catalyzes the prenylation of para-hydroxybenzoate (PHB) with an all-trans polyprenyl group. Mediates the second step in the final reaction sequence of ubiquinone-8 (UQ-8) biosynthesis, which is the condensation of the polyisoprenoid side chain with PHB, generating the first membrane-bound Q intermediate 3-octaprenyl-4-hydroxybenzoate. The sequence is that of 4-hydroxybenzoate octaprenyltransferase from Aromatoleum aromaticum (strain DSM 19018 / LMG 30748 / EbN1) (Azoarcus sp. (strain EbN1)).